An 87-amino-acid polypeptide reads, in one-letter code: Small ribosomal subunit protein bS20 (87 aa).

The protein belongs to the bacterial ribosomal protein bS20 family.

Its function is as follows. Binds directly to 16S ribosomal RNA. The sequence is that of Small ribosomal subunit protein bS20 from Corynebacterium jeikeium (strain K411).